We begin with the raw amino-acid sequence, 89 residues long: Small ribosomal subunit protein uS15 (89 aa).

It belongs to the universal ribosomal protein uS15 family. As to quaternary structure, part of the 30S ribosomal subunit. Forms a bridge to the 50S subunit in the 70S ribosome, contacting the 23S rRNA.

In terms of biological role, one of the primary rRNA binding proteins, it binds directly to 16S rRNA where it helps nucleate assembly of the platform of the 30S subunit by binding and bridging several RNA helices of the 16S rRNA. Forms an intersubunit bridge (bridge B4) with the 23S rRNA of the 50S subunit in the ribosome. This chain is Small ribosomal subunit protein uS15, found in Beijerinckia indica subsp. indica (strain ATCC 9039 / DSM 1715 / NCIMB 8712).